The following is a 242-amino-acid chain: uncharacterized protein (242 aa).

An S4 RNA-binding domain is found at 2–69; it reads YRLAKIISNA…KPRLWIYYKP (68 aa). Asp-102 serves as the catalytic Nucleophile.

This sequence belongs to the pseudouridine synthase RsuA family.

It catalyses the reaction a uridine in RNA = a pseudouridine in RNA. This is an uncharacterized protein from Rickettsia typhi (strain ATCC VR-144 / Wilmington).